A 356-amino-acid polypeptide reads, in one-letter code: Histidinol-phosphate aminotransferase (356 aa).

Lys214 is modified (N6-(pyridoxal phosphate)lysine).

The protein belongs to the class-II pyridoxal-phosphate-dependent aminotransferase family. Histidinol-phosphate aminotransferase subfamily. Homodimer. The cofactor is pyridoxal 5'-phosphate.

It catalyses the reaction L-histidinol phosphate + 2-oxoglutarate = 3-(imidazol-4-yl)-2-oxopropyl phosphate + L-glutamate. It participates in amino-acid biosynthesis; L-histidine biosynthesis; L-histidine from 5-phospho-alpha-D-ribose 1-diphosphate: step 7/9. This is Histidinol-phosphate aminotransferase from Escherichia coli O7:K1 (strain IAI39 / ExPEC).